Consider the following 272-residue polypeptide: 3-methyl-2-oxobutanoate hydroxymethyltransferase (272 aa).

Aspartate 42 and aspartate 86 together coordinate Mg(2+). Residues 42–43 (DS), aspartate 86, and lysine 116 each bind 3-methyl-2-oxobutanoate. Residue glutamate 118 coordinates Mg(2+). The active-site Proton acceptor is glutamate 185. The disordered stretch occupies residues 251 to 272 (LKEQRDQRATPTTPPPPPAPDC). Residues 262 to 272 (TTPPPPPAPDC) are compositionally biased toward pro residues.

Belongs to the PanB family. As to quaternary structure, homodecamer; pentamer of dimers. It depends on Mg(2+) as a cofactor.

The protein resides in the cytoplasm. The catalysed reaction is 3-methyl-2-oxobutanoate + (6R)-5,10-methylene-5,6,7,8-tetrahydrofolate + H2O = 2-dehydropantoate + (6S)-5,6,7,8-tetrahydrofolate. Its pathway is cofactor biosynthesis; (R)-pantothenate biosynthesis; (R)-pantoate from 3-methyl-2-oxobutanoate: step 1/2. Functionally, catalyzes the reversible reaction in which hydroxymethyl group from 5,10-methylenetetrahydrofolate is transferred onto alpha-ketoisovalerate to form ketopantoate. This Synechococcus sp. (strain CC9311) protein is 3-methyl-2-oxobutanoate hydroxymethyltransferase.